The primary structure comprises 250 residues: MRVAATTRPASSSAAAPLPLFLLLAVAAAAAALFLVGSASLAMAGHVLGGAHDAPSAANSVETDALARFAVDEHNKRENALLEFVRVVEAKEQVVAGTLHHLTLEALEAGRKKVYEAKVWVKPWLDFKELQEFRNTGDATTFTNADLGAKKGGHEPGWRDVPVHDPVVKDAADHAVKSIQQRSNSLFPYELLEIVRAKAEVVEDFAKFDILMKLKRGNKEEKFKAEVHKNLEGAFVLNQMQQEHDESSSQ.

A signal peptide spans M1–A32. Cystatin domains follow at residues G49–G137 and P156–V202. The short motif at Q93–G97 is the Secondary area of contact element.

It belongs to the cystatin family. Phytocystatin subfamily.

It localises to the secreted. Its function is as follows. Specific inhibitor of cysteine proteinases. Probably involved in the regulation of endogenous processes and in defense against pests and pathogens. This is Cysteine proteinase inhibitor 12 from Oryza sativa subsp. japonica (Rice).